Here is a 465-residue protein sequence, read N- to C-terminus: Citrate synthase-like protein (465 aa).

A disordered region spans residues His-13 to Ser-40. Residues Thr-21–Thr-31 are compositionally biased toward polar residues. Residues His-357 and Asp-413 contribute to the active site.

The protein belongs to the citrate synthase family.

Its pathway is secondary metabolite biosynthesis. In terms of biological role, citrate synthase-like protein; part of the gene cluster that mediates the biosynthesis of squalestatin S1 (SQS1, also known as zaragozic acid A), a heavily oxidized fungal polyketide that offers potent cholesterol lowering activity by targeting squalene synthase (SS). SQS1 is composed of a 2,8-dioxobicyclic[3.2.1]octane-3,4,5-tricarboxyclic acid core that is connected to two lipophilic polyketide arms. These initial steps feature the priming of an unusual benzoic acid starter unit onto the highly reducing polyketide synthase pks2, followed by oxaloacetate extension and product release to generate a tricarboxylic acid containing product. The phenylalanine ammonia lyase (PAL) M7 and the acyl-CoA ligase M9 are involved in transforming phenylalanine into benzoyl-CoA. The citrate synthase-like protein R3 is involved in connecting the C-alpha-carbons of the hexaketide chain and oxaloacetate to afford the tricarboxylic acid unit. The potential hydrolytic enzymes, M8 and M10, are in close proximity to pks2 and may participate in product release. On the other side, the tetraketide arm is synthesized by a the squalestatin tetraketide synthase pks1 and enzymatically esterified to the core in the last biosynthetic step, by the acetyltransferase M4. The biosynthesis of the tetraketide must involve 3 rounds of chain extension. After the first and second rounds methyl-transfer occurs, and in all rounds of extension the ketoreductase and dehydratase are active. The enoyl reductase and C-MeT of pks1 are not active in the final round of extension. The acetyltransferase M4 appears to have a broad substrate selectivity for its acyl CoA substrate, allowing the in vitro synthesis of novel squalestatins. The biosynthesis of SQS1 requires several oxidative steps likely performed by oxidoreductases M1, R1 and R2. Finally, in support of the identification of the cluster as being responsible for SQS1 production, the cluster contains a gene encoding a putative squalene synthase (SS) R6, suggesting a likely mechanism for self-resistance. The protein is Citrate synthase-like protein of Phoma sp. (strain ATCC 20986 / MF5453).